The sequence spans 887 residues: Putative RNA-binding protein 15B (887 aa).

The disordered stretch occupies residues 1-132; the sequence is MKRQSERDSS…EPAGPGSTAA (132 aa). A compositionally biased stretch (low complexity) spans 10–20; sequence SPSGRGSSSSA. 2 stretches are compositionally biased toward basic and acidic residues: residues 22 to 34 and 65 to 77; these read RPRE…EAGG and GHRD…DANH. Over residues 83-94 the composition is skewed to gly residues; that stretch reads RSSGAPGGGGRT. Residues 95-110 are compositionally biased toward low complexity; sequence GKASGDPGAGGASPRA. Phosphoserine is present on residues serine 107 and serine 111. A compositionally biased stretch (pro residues) spans 111–122; it reads SPLPPPPPPPGA. Positions 123 to 132 are enriched in low complexity; it reads EPAGPGSTAA. One can recognise an RRM 1 domain in the interval 136 to 216; that stretch reads KTLLISSLSP…RPLKVEPVYL (81 aa). Lysine 210 is covalently cross-linked (Glycyl lysine isopeptide (Lys-Gly) (interchain with G-Cter in SUMO2)). The tract at residues 215–249 is disordered; the sequence is YLRGGGSSRRSSSSSAAASTPPPGPPAPADPLGYL. The span at 222–233 shows a compositional bias: low complexity; sequence SRRSSSSSAAAS. Positions 234–243 are enriched in pro residues; it reads TPPPGPPAPA. Serine 261 and serine 263 each carry phosphoserine. 2 RRM domains span residues 333–410 and 414–488; these read RNLF…YGKA and TRLW…FAKA. Position 529 is a phosphothreonine (threonine 529). A phosphoserine mark is found at serine 549, serine 553, and serine 559. Residues 549–703 form a disordered region; sequence SLSKSSDRRN…TLEEPKHETK (155 aa). Basic and acidic residues-rich tracts occupy residues 570-613, 623-643, and 668-700; these read RSGE…ERSR, RGSD…EGTK, and EAPD…EPKH. Residues 590–594 carry the Nuclear localization signal motif; that stretch reads RRKRR. A Glycyl lysine isopeptide (Lys-Gly) (interchain with G-Cter in SUMO2) cross-link involves residue lysine 699. The region spanning 708 to 886 is the SPOC domain; that stretch reads LSEYAQTLQL…HMVIVIVRDT (179 aa). The segment at 719-887 is interaction with Epstein-Barr virus BMLF1; that stretch reads WNGLLVLKNS…MVIVIVRDTA (169 aa).

Belongs to the RRM Spen family. In terms of assembly, component of the WMM complex, a N6-methyltransferase complex composed of a catalytic subcomplex, named MAC, and of an associated subcomplex, named MACOM. The MAC subcomplex is composed of METTL3 and METTL14. The MACOM subcomplex is composed of WTAP, ZC3H13, CBLL1/HAKAI, VIRMA, and, in some cases of RBM15 (RBM15 or RBM15B). May interact with NCOR2. Interacts with NXF1, the interaction is required to promote mRNA export.

The protein resides in the nucleus. Its subcellular location is the nucleoplasm. It localises to the nucleus speckle. It is found in the nucleus envelope. RNA-binding protein that acts as a key regulator of N6-methyladenosine (m6A) methylation of RNAs, thereby regulating different processes, such as alternative splicing of mRNAs and X chromosome inactivation mediated by Xist RNA. Associated component of the WMM complex, a complex that mediates N6-methyladenosine (m6A) methylation of RNAs, a modification that plays a role in the efficiency of mRNA splicing and RNA processing. Plays a key role in m6A methylation, possibly by binding target RNAs and recruiting the WMM complex. Involved in random X inactivation mediated by Xist RNA: acts by binding Xist RNA and recruiting the WMM complex, which mediates m6A methylation, leading to target YTHDC1 reader on Xist RNA and promoting transcription repression activity of Xist. Functions in the regulation of alternative or illicit splicing, possibly by regulating m6A methylation. Inhibits pre-mRNA splicing. Also functions as a mRNA export factor by acting as a cofactor for the nuclear export receptor NXF1. This Mus musculus (Mouse) protein is Putative RNA-binding protein 15B (Rbm15b).